The chain runs to 235 residues: Calcium-activated potassium channel subunit beta-2 (235 aa).

The interval 1 to 45 is ball and chain; sequence MFIWTSGRTSSSYRHDEKRNIYQKIRDHDLLDKRKTVTALKAGED. The Cytoplasmic segment spans residues 1–46; the sequence is MFIWTSGRTSSSYRHDEKRNIYQKIRDHDLLDKRKTVTALKAGEDR. The chain crosses the membrane as a helical span at residues 47-67; it reads AILLGLAMMVCSIMMYFLLGI. Topologically, residues 68–194 are extracellular; that stretch reads TLLRSYMQSV…VILTKLYSSN (127 aa). Residues Asn88, Asn96, and Asn119 are each glycosylated (N-linked (GlcNAc...) asparagine). A helical membrane pass occupies residues 195–215; the sequence is VLFHSLFWPTCMMAGGVAIVA. At 216 to 235 the chain is on the cytoplasmic side; it reads MVKLTQYLSLLCERIQRINR.

The protein belongs to the KCNMB (TC 8.A.14.1) family. KCNMB2 subfamily. Interacts with KCNMA1 tetramer. There are probably 4 molecules of KCMNB2 per KCNMA1 tetramer. N-glycosylated. As to expression, expressed in kidney, heart and brain. Highly expressed in ovary. Expressed at low level in other tissues.

It is found in the membrane. Its function is as follows. Regulatory subunit of the calcium activated potassium KCNMA1 (maxiK) channel. Modulates the calcium sensitivity and gating kinetics of KCNMA1, thereby contributing to KCNMA1 channel diversity. Acts as a negative regulator that confers rapid and complete inactivation of KCNMA1 channel complex. May participate in KCNMA1 inactivation in chromaffin cells of the adrenal gland or in hippocampal CA1 neurons. In Homo sapiens (Human), this protein is Calcium-activated potassium channel subunit beta-2 (KCNMB2).